Consider the following 579-residue polypeptide: Mycobactin import ATP-binding/permease protein IrtB (579 aa).

Residues 1–25 (MIRTLLRLVPAEKRGAVAGYAVLTL) are Cytoplasmic-facing. The region spanning 21-299 (AVLTLLSVLL…IADLAPALET (279 aa)) is the ABC transmembrane type-1 domain. A helical transmembrane segment spans residues 26 to 46 (LSVLLRAVGAVLLIPLLAALF). The Periplasmic segment spans residues 47–48 (SD). The helical transmembrane segment at 49–69 (TPSDAWLWLGWLTAVTLAGWV) threads the bilayer. The Cytoplasmic segment spans residues 70 to 126 (TDTNTARLGFDLGFAVLSRTQHDMADRLPNVAMSWFTPDNTATARQAIAATGPELAG). 2 helical membrane-spanning segments follow: residues 127–147 (LVVN…AIGV) and 148–168 (ALLF…AVLF). The Cytoplasmic portion of the chain corresponds to 169-241 (GALALSGRLS…RLLTMQIPGQ (73 aa)). The helical transmembrane segment at 242-262 (VLFSLAGQVALIGFAGMAVWL) threads the bilayer. At 263–272 (TVRGQLGVPE) the chain is on the periplasmic side. A helical transmembrane segment spans residues 273 to 293 (AIALIVVLVRYLEPFAAIADL). Residues 294–579 (APALETTRAT…SEWAIGSTAR (286 aa)) are Cytoplasmic-facing. The ABC transporter domain occupies 332–565 (IEFDDVRFSY…GGRFAQFWAQ (234 aa)). 364–371 (GPSGSGKT) is a binding site for ATP.

Belongs to the ABC transporter superfamily. Siderophore-Fe(3+) uptake transporter (SIUT) (TC 3.A.1.21) family. In terms of assembly, forms a heterodimer with IrtA.

The protein localises to the cell inner membrane. Its activity is regulated as follows. The ATPase activity of IrtAB is stimulated more than 38-fold in the presence of Fe-MBT, and more than 10-fold in the presence of Fe-cMBT. Part of the ABC transporter complex IrtAB involved in the import of iron-bound mycobactin (Fe-MBT) and carboxymycobactin (Fe-cMBT). Has a preference for Fe-MBT over Fe-cMBT. Transmembrane domains (TMD) form a pore in the membrane and the ATP-binding domain (NBD) is responsible for energy generation. The chain is Mycobactin import ATP-binding/permease protein IrtB from Mycolicibacterium thermoresistibile (strain ATCC 19527 / DSM 44167 / CIP 105390 / JCM 6362 / NCTC 10409 / 316) (Mycobacterium thermoresistibile).